A 556-amino-acid chain; its full sequence is Formate--tetrahydrofolate ligase (556 aa).

65–72 serves as a coordination point for ATP; it reads TPAGEGKS.

The protein belongs to the formate--tetrahydrofolate ligase family.

It catalyses the reaction (6S)-5,6,7,8-tetrahydrofolate + formate + ATP = (6R)-10-formyltetrahydrofolate + ADP + phosphate. It functions in the pathway one-carbon metabolism; tetrahydrofolate interconversion. This is Formate--tetrahydrofolate ligase from Streptococcus mutans serotype c (strain ATCC 700610 / UA159).